Reading from the N-terminus, the 599-residue chain is Sulfite reductase [NADPH] flavoprotein alpha-component (599 aa).

Positions 64 to 202 (VTLISASQTG…AASEWRARVV (139 aa)) constitute a Flavodoxin-like domain. Residues 70 to 75 (SQTGNA), 117 to 120 (STQG), and 153 to 162 (LGDTSYEFFC) contribute to the FMN site. In terms of domain architecture, FAD-binding FR-type spans 234–448 (DAPLAATLSV…IEHNDNFRLP (215 aa)). FAD contacts are provided by residues T322, A356, 386–389 (RLYS), 404–406 (TVG), Y410, and 419–422 (GGAS). Residues 519 to 520 (SR), 525 to 529 (KIYVQ), and D561 each bind NADP(+). Y599 provides a ligand contact to FAD.

The protein belongs to the NADPH-dependent sulphite reductase flavoprotein subunit CysJ family. In the N-terminal section; belongs to the flavodoxin family. This sequence in the C-terminal section; belongs to the flavoprotein pyridine nucleotide cytochrome reductase family. Alpha(8)-beta(8). The alpha component is a flavoprotein, the beta component is a hemoprotein. FAD is required as a cofactor. FMN serves as cofactor.

It catalyses the reaction hydrogen sulfide + 3 NADP(+) + 3 H2O = sulfite + 3 NADPH + 4 H(+). It functions in the pathway sulfur metabolism; hydrogen sulfide biosynthesis; hydrogen sulfide from sulfite (NADPH route): step 1/1. Component of the sulfite reductase complex that catalyzes the 6-electron reduction of sulfite to sulfide. This is one of several activities required for the biosynthesis of L-cysteine from sulfate. The flavoprotein component catalyzes the electron flow from NADPH -&gt; FAD -&gt; FMN to the hemoprotein component. The polypeptide is Sulfite reductase [NADPH] flavoprotein alpha-component (Salmonella paratyphi B (strain ATCC BAA-1250 / SPB7)).